A 495-amino-acid polypeptide reads, in one-letter code: Cobyric acid synthase (495 aa).

The region spanning 262-445 is the GATase cobBQ-type domain; the sequence is CLEIAVIRLP…LHGLFDNHRW (184 aa). C340 (nucleophile) is an active-site residue. H437 is a catalytic residue.

Belongs to the CobB/CobQ family. CobQ subfamily.

It functions in the pathway cofactor biosynthesis; adenosylcobalamin biosynthesis. Catalyzes amidations at positions B, D, E, and G on adenosylcobyrinic A,C-diamide. NH(2) groups are provided by glutamine, and one molecule of ATP is hydrogenolyzed for each amidation. The protein is Cobyric acid synthase of Synechococcus sp. (strain JA-3-3Ab) (Cyanobacteria bacterium Yellowstone A-Prime).